A 152-amino-acid polypeptide reads, in one-letter code: uncharacterized protein (152 aa).

The protein belongs to the antirestriction protein family.

This is an uncharacterized protein from Escherichia coli (strain K12).